The sequence spans 461 residues: Glycine--tRNA ligase (461 aa).

Substrate-binding residues include R100 and E163. Residues 195 to 197 (RNE), 205 to 210 (FRTREF), 282 to 283 (EL), and 326 to 329 (GLGR) each bind ATP. 210–214 (FEQME) provides a ligand contact to substrate. 322–326 (EPAAG) provides a ligand contact to substrate.

This sequence belongs to the class-II aminoacyl-tRNA synthetase family. As to quaternary structure, homodimer.

It localises to the cytoplasm. The catalysed reaction is tRNA(Gly) + glycine + ATP = glycyl-tRNA(Gly) + AMP + diphosphate. Its function is as follows. Catalyzes the attachment of glycine to tRNA(Gly). This Corynebacterium efficiens (strain DSM 44549 / YS-314 / AJ 12310 / JCM 11189 / NBRC 100395) protein is Glycine--tRNA ligase.